Consider the following 451-residue polypeptide: Penicillin-binding protein 4* (451 aa).

S61 serves as the catalytic Acyl-ester intermediate.

This sequence belongs to the beta-lactamase family.

It is found in the forespore outer membrane. It functions in the pathway cell wall biogenesis; peptidoglycan biosynthesis. Functionally, probably involved in peptidoglycan modification during cortex synthesis. In Bacillus subtilis (strain 168), this protein is Penicillin-binding protein 4* (pbpE).